The primary structure comprises 471 residues: Eremophilane O-acetyltransferase prx11 (471 aa).

Belongs to the fumigaclavine B O-acetyltransferase family. Monomer.

Its pathway is sesquiterpene biosynthesis. In terms of biological role, O-acetyltransferase; part of the gene cluster that mediates the biosynthesis of PR-toxin, a bicyclic sesquiterpene belonging to the eremophilane class and acting as a mycotoxin. The first step of the pathway is catalyzed by the aristolochene synthase which performs the cyclization of trans,trans-farnesyl diphosphate (FPP) to the bicyclic sesquiterpene aristolochene. Following the formation of aristolochene, the non-oxygenated aristolochene is converted to the trioxygenated intermediate eremofortin B, via 7-epi-neopetasone. This conversion appears to involve three enzymes, a hydroxysterol oxidase-like enzyme, the quinone-oxidase prx3 that forms the quinone-type-structure in the bicyclic nucleus of aristolochene with the C8-oxo group and the C-3 hydroxyl group, and the P450 monooxygenase prx9 that introduces the epoxide at the double bond between carbons 1 and 2. No monoxy or dioxy-intermediates have been reported to be released to the broth, so these three early oxidative reactions may be coupled together. Eremofortin B is further oxidized by another P450 monooxygenase, that introduces a second epoxide between carbons 7 and 11 prior to acetylation to eremofortin A by the acetyltransferase prx11. The second epoxidation may be performed by a second P450 monooxygenase. After the acetylation step, eremofortin A is converted to eremofortin C and then to PR-toxin. First the conversion of eremofortin A to eremofortin C proceeds by oxidation of the side chain of the molecule at C-12 and is catalyzed by the short-chain oxidoreductase prx1. The cytochrome P450 monooxygenase prx8 also plays a role in this step. The primary alcohol formed at C-12 is finally oxidized by the short-chain alcohol dehydrogenase prx4 that forms PR-toxin. The chain is Eremophilane O-acetyltransferase prx11 from Penicillium rubens (strain ATCC 28089 / DSM 1075 / NRRL 1951 / Wisconsin 54-1255) (Penicillium chrysogenum).